The primary structure comprises 117 residues: Large ribosomal subunit protein bL20 (117 aa).

The protein belongs to the bacterial ribosomal protein bL20 family.

Its function is as follows. Binds directly to 23S ribosomal RNA and is necessary for the in vitro assembly process of the 50S ribosomal subunit. It is not involved in the protein synthesizing functions of that subunit. The sequence is that of Large ribosomal subunit protein bL20 from Solidesulfovibrio magneticus (strain ATCC 700980 / DSM 13731 / RS-1) (Desulfovibrio magneticus).